The sequence spans 261 residues: Arcelin-5A (261 aa).

A signal peptide spans Met-1–Ser-21. Residues Asn-43, Asn-91, and Asn-100 are each glycosylated (N-linked (GlcNAc...) asparagine). Cys-167 and Cys-203 form a disulfide bridge. A propeptide spanning residues Ile-255–Leu-261 is cleaved from the precursor.

Belongs to the leguminous lectin family. In terms of assembly, monomer. Post-translationally, the C-terminal segment appears to be highly susceptible to proteolysis.

In terms of biological role, seed storage. This carbohydrate-binding lectin has toxic effects on bean bruchid pests. In Phaseolus vulgaris (Kidney bean), this protein is Arcelin-5A (ARC5A).